The chain runs to 514 residues: Nucleus accumbens-associated protein 1 (514 aa).

Residues cysteine 30–methionine 94 enclose the BTB domain. Residue lysine 167 forms a Glycyl lysine isopeptide (Lys-Gly) (interchain with G-Cter in SUMO1); alternate linkage. Residue lysine 167 forms a Glycyl lysine isopeptide (Lys-Gly) (interchain with G-Cter in SUMO2); alternate linkage. Residue lysine 182 forms a Glycyl lysine isopeptide (Lys-Gly) (interchain with G-Cter in SUMO2) linkage. 2 disordered regions span residues arginine 183–proline 218 and glycine 241–threonine 279. The residue at position 187 (serine 187) is a Phosphoserine. Residues proline 242 to glycine 251 are compositionally biased toward polar residues. Serine 245 bears the Phosphoserine; by PKC mark. Low complexity predominate over residues threonine 252–tyrosine 264. Acidic residues predominate over residues glutamate 267–threonine 279. Residues lysine 304, lysine 438, lysine 466, and lysine 485 each participate in a glycyl lysine isopeptide (Lys-Gly) (interchain with G-Cter in SUMO2) cross-link. The 98-residue stretch at glycine 360–valine 457 folds into the BEN domain. Phosphoserine is present on residues serine 492 and serine 496.

Homooligomer; mediated by the BTB domain. Both isoforms interact with HDAC3 and HDAC4. Interacts (via BTB domain) with CUL3, PSMD7 and RCOR1. Post-translationally, phosphorylated by protein kinase C (PKC). As to expression, highly expressed in the hippocampus, brain cortex, cerebellum and brainstem. Expressed in the nucleus accumbens, olfactory tubercle, the striatum, frontal and parietal cortex and ventral pallidum. Weakly expressed in the heart, liver, kidney, spleen, testis, and skeletal muscle. Isoform 2 is expressed in the brain and liver, less abundantly expressed in the brain than isoform 1.

Its subcellular location is the nucleus. The protein resides in the cytoplasm. In terms of biological role, functions as a transcriptional repressor. Isoform 1 is a stronger transcriptional repressor than isoform 2. Seems to function as a transcriptional corepressor in neuronal cells through recruitment of HDAC3 and HDAC4. Contributes to tumor progression, and tumor cell proliferation and survival. This may be mediated at least in part through repressing transcriptional activity of GADD45GIP1. Required for recruiting the proteasome from the nucleus to the cytoplasm and dendritic spines. The sequence is that of Nucleus accumbens-associated protein 1 (Nacc1) from Rattus norvegicus (Rat).